The sequence spans 300 residues: Glycine--tRNA ligase alpha subunit (300 aa).

This sequence belongs to the class-II aminoacyl-tRNA synthetase family. In terms of assembly, tetramer of two alpha and two beta subunits.

Its subcellular location is the cytoplasm. The enzyme catalyses tRNA(Gly) + glycine + ATP = glycyl-tRNA(Gly) + AMP + diphosphate. This chain is Glycine--tRNA ligase alpha subunit, found in Prochlorococcus marinus (strain MIT 9313).